A 217-amino-acid chain; its full sequence is Octanoyltransferase (217 aa).

The 176-residue stretch at 32-207 folds into the BPL/LPL catalytic domain; the sequence is SDSPDELWIV…TLSQLLGYQQ (176 aa). Residues 71–78, 138–140, and 151–153 contribute to the substrate site; these read RGGQVTYH, SLG, and GLA. The active-site Acyl-thioester intermediate is cysteine 169.

It belongs to the LipB family.

The protein resides in the cytoplasm. It catalyses the reaction octanoyl-[ACP] + L-lysyl-[protein] = N(6)-octanoyl-L-lysyl-[protein] + holo-[ACP] + H(+). Its pathway is protein modification; protein lipoylation via endogenous pathway; protein N(6)-(lipoyl)lysine from octanoyl-[acyl-carrier-protein]: step 1/2. Functionally, catalyzes the transfer of endogenously produced octanoic acid from octanoyl-acyl-carrier-protein onto the lipoyl domains of lipoate-dependent enzymes. Lipoyl-ACP can also act as a substrate although octanoyl-ACP is likely to be the physiological substrate. In Shewanella sp. (strain ANA-3), this protein is Octanoyltransferase.